Reading from the N-terminus, the 723-residue chain is Threonine--tRNA ligase 1, cytoplasmic (723 aa).

A compositionally biased stretch (polar residues) spans 1–10 (MSEEQASSPS). Residues 1–49 (MSEEQASSPSAKMGDEEKPVGAGEEKQKEGSKKKNKEGSGDGGRAELNP) are disordered. Over residues 13–39 (MGDEEKPVGAGEEKQKEGSKKKNKEGS) the composition is skewed to basic and acidic residues. Serine 39 bears the Phosphoserine mark. Positions 79–143 (DSKPIKVTLP…EEDCTLELLK (65 aa)) constitute a TGS domain. Residue lysine 243 is modified to N6-acetyllysine. Threonine 246 is modified (phosphothreonine). The residue at position 298 (tyrosine 298) is a Phosphotyrosine. A Phosphothreonine modification is found at threonine 453. The residue at position 702 (serine 702) is a Phosphoserine.

This sequence belongs to the class-II aminoacyl-tRNA synthetase family. As to quaternary structure, homodimer. Post-translationally, ISGylated.

The protein resides in the cytoplasm. It carries out the reaction tRNA(Thr) + L-threonine + ATP = L-threonyl-tRNA(Thr) + AMP + diphosphate + H(+). Functionally, catalyzes the attachment of threonine to tRNA(Thr) in a two-step reaction: threonine is first activated by ATP to form Thr-AMP and then transferred to the acceptor end of tRNA(Thr). Also edits incorrectly charged tRNA(Thr) via its editing domain, at the post-transfer stage. The sequence is that of Threonine--tRNA ligase 1, cytoplasmic (TARS1) from Bos taurus (Bovine).